A 1436-amino-acid polypeptide reads, in one-letter code: Non-structural polyprotein 1AB (1436 aa).

A coiled-coil region spans residues lysine 104 to glutamate 142. A run of 5 helical transmembrane segments spans residues tryptophan 156–serine 176, valine 239–glycine 259, valine 286–valine 306, leucine 313–methionine 333, and glycine 344–threonine 364. Residues histidine 461, aspartate 489, and serine 551 each act as charge relay system; for serine protease activity in the active site. A coiled-coil region spans residues valine 587–glutamine 620. Tyrosine 693 bears the O-(5'-phospho-RNA)-tyrosine mark. Disordered regions lie at residues alanine 756–threonine 828 and serine 913–glycine 934. A RdRp catalytic domain is found at lysine 1181 to glutamate 1307.

This sequence belongs to the astroviridae polyprotein 1AB family. As to quaternary structure, monomer. Cleaved by the viral and host proteases. The protease is probably autocatalytically cleaved.

The protein localises to the host membrane. It catalyses the reaction RNA(n) + a ribonucleoside 5'-triphosphate = RNA(n+1) + diphosphate. Responsible for the cleavage of the polyprotein into functional products. Its function is as follows. Protein covalently attached to the 5' extremity of the genomic and subgenomic RNAs. It may serve as a primer for the replicase. In Homo sapiens (Human), this protein is Non-structural polyprotein 1AB (ORF1).